A 543-amino-acid chain; its full sequence is Chaperonin GroEL 7 (543 aa).

Residues Thr30–Pro33, Lys51, Asp87–Thr91, Gly415, and Asp496 contribute to the ATP site.

It belongs to the chaperonin (HSP60) family. As to quaternary structure, forms a cylinder of 14 subunits composed of two heptameric rings stacked back-to-back. Interacts with the co-chaperonin GroES.

The protein localises to the cytoplasm. The enzyme catalyses ATP + H2O + a folded polypeptide = ADP + phosphate + an unfolded polypeptide.. Together with its co-chaperonin GroES, plays an essential role in assisting protein folding. The GroEL-GroES system forms a nano-cage that allows encapsulation of the non-native substrate proteins and provides a physical environment optimized to promote and accelerate protein folding. The sequence is that of Chaperonin GroEL 7 from Bradyrhizobium diazoefficiens (strain JCM 10833 / BCRC 13528 / IAM 13628 / NBRC 14792 / USDA 110).